The sequence spans 109 residues: ATP-dependent Clp protease adapter protein ClpS (109 aa).

Residues 1 to 21 (MAERKQGGQNNGAGSSVITEV) are disordered.

This sequence belongs to the ClpS family. In terms of assembly, binds to the N-terminal domain of the chaperone ClpA.

In terms of biological role, involved in the modulation of the specificity of the ClpAP-mediated ATP-dependent protein degradation. This chain is ATP-dependent Clp protease adapter protein ClpS, found in Caulobacter sp. (strain K31).